The chain runs to 210 residues: Cytochrome c biogenesis ATP-binding export protein CcmA (210 aa).

One can recognise an ABC transporter domain in the interval 4-208 (VPTLSFSKLG…GAIPAQLLEL (205 aa)). ATP is bound at residue 39-46 (GANGVGKT).

It belongs to the ABC transporter superfamily. CcmA exporter (TC 3.A.1.107) family. In terms of assembly, the complex is composed of two ATP-binding proteins (CcmA) and two transmembrane proteins (CcmB).

The protein resides in the cell inner membrane. It carries out the reaction heme b(in) + ATP + H2O = heme b(out) + ADP + phosphate + H(+). In terms of biological role, part of the ABC transporter complex CcmAB involved in the biogenesis of c-type cytochromes; once thought to export heme, this seems not to be the case, but its exact role is uncertain. Responsible for energy coupling to the transport system. The chain is Cytochrome c biogenesis ATP-binding export protein CcmA from Albidiferax ferrireducens (strain ATCC BAA-621 / DSM 15236 / T118) (Rhodoferax ferrireducens).